The following is a 353-amino-acid chain: Phosphate acyltransferase (353 aa).

This sequence belongs to the PlsX family. As to quaternary structure, homodimer. Probably interacts with PlsY.

Its subcellular location is the cytoplasm. It carries out the reaction a fatty acyl-[ACP] + phosphate = an acyl phosphate + holo-[ACP]. The protein operates within lipid metabolism; phospholipid metabolism. In terms of biological role, catalyzes the reversible formation of acyl-phosphate (acyl-PO(4)) from acyl-[acyl-carrier-protein] (acyl-ACP). This enzyme utilizes acyl-ACP as fatty acyl donor, but not acyl-CoA. The sequence is that of Phosphate acyltransferase from Afipia carboxidovorans (strain ATCC 49405 / DSM 1227 / KCTC 32145 / OM5) (Oligotropha carboxidovorans).